Here is a 65-residue protein sequence, read N- to C-terminus: Small ribosomal subunit protein bS21A (65 aa).

It belongs to the bacterial ribosomal protein bS21 family.

This Francisella tularensis subsp. tularensis (strain FSC 198) protein is Small ribosomal subunit protein bS21A.